The primary structure comprises 342 residues: Transmembrane protein 268 (342 aa).

A run of 2 helical transmembrane segments spans residues 106-126 and 133-153; these read AFAV…SQMF and AGVL…VLVF. Positions 245-267 are disordered; that stretch reads VEGPEDLEDAPLLPSTPGPQERP.

Interacts with ITGAM; this interaction inhibits ITGAM degradation via the endosome-lysosome pathway. Interacts with ITGB4; this interaction prevents ITGB4 degradation.

The protein localises to the cell membrane. Its function is as follows. Stabilizes cell surface expression of ITGAM and participates in the adhesion and migration of phagocytes during bacterial clearance. The protein is Transmembrane protein 268 of Mus musculus (Mouse).